The primary structure comprises 607 residues: Guanine nucleotide-binding protein-like 1 (607 aa).

The span at 1–14 (MPRKKPFSVKQKKK) shows a compositional bias: basic residues. Residues 1–81 (MPRKKPFSVK…GPRGYDPNRY (81 aa)) are disordered. Positions 15-26 (QLQDKRERKRGL) are enriched in basic and acidic residues. A phosphoserine mark is found at Ser32, Ser33, and Ser34. Residues Thr48 and Thr50 each carry the phosphothreonine modification. Ser51 and Ser68 each carry phosphoserine. The CP-type G domain occupies 178–418 (WRQLWRVLEM…LCDCPGLIFP (241 aa)). 225–228 (NKVD) serves as a coordination point for GTP. Residue Ser324 is modified to Phosphoserine. GTP contacts are provided by residues 367 to 374 (GFPNVGKS) and 411 to 415 (DCPGL). The disordered stretch occupies residues 547 to 607 (GPAGDEEEEE…PYALLGEDEC (61 aa)). The span at 550 to 584 (GDEEEEEEEELSSSCEEEGEEDRDADEEGEGDEET) shows a compositional bias: acidic residues. 3 positions are modified to phosphoserine: Ser561, Ser562, and Ser563.

It belongs to the TRAFAC class YlqF/YawG GTPase family.

In terms of biological role, possible regulatory or functional link with the histocompatibility cluster. In Pan troglodytes (Chimpanzee), this protein is Guanine nucleotide-binding protein-like 1 (GNL1).